Reading from the N-terminus, the 691-residue chain is Elongation factor G (691 aa).

Residues 8-283 (EDYRNFGIMA…AVVDYLPSPA (276 aa)) enclose the tr-type G domain. GTP-binding positions include 17–24 (AHIDAGKT), 81–85 (DTPGH), and 135–138 (NKMD).

Belongs to the TRAFAC class translation factor GTPase superfamily. Classic translation factor GTPase family. EF-G/EF-2 subfamily.

It localises to the cytoplasm. Functionally, catalyzes the GTP-dependent ribosomal translocation step during translation elongation. During this step, the ribosome changes from the pre-translocational (PRE) to the post-translocational (POST) state as the newly formed A-site-bound peptidyl-tRNA and P-site-bound deacylated tRNA move to the P and E sites, respectively. Catalyzes the coordinated movement of the two tRNA molecules, the mRNA and conformational changes in the ribosome. The chain is Elongation factor G from Methylobacterium sp. (strain 4-46).